The sequence spans 442 residues: Protein UNUSUAL FLORAL ORGANS (442 aa).

Residues 1-85 (MDSTVFINNP…RFYSLLFSNT (85 aa)) are interaction with SKP1A. Residues 44 to 90 (GRIWSKLPPPLLDRVIAFLPPPAFFRTRCVCKRFYSLLFSNTFLETY) form the F-box domain.

In terms of assembly, part of a putative SCF (ASK/Cullin/F-box) ubiquitin ligase complex. Interacts with SKP1A/ASK1, SKP1B/ASK2 and ASK11.

Its subcellular location is the nucleus. It functions in the pathway protein modification; protein ubiquitination. In terms of biological role, component of SCF(ASK-cullin-F-box) E3 ubiquitin ligase complexes, which may mediate the ubiquitination and subsequent proteasomal degradation of target proteins. Considered as a meristem identity factor required for normal growth of the young floral meristem. Acts together with LEAFY to positively regulate the B class floral homeotic genes APETALA3 and PISTILLATA. In this way, operates as a region-specific regulator for petal and stamen development. Alternatively, may play a role as a negative regulator of the C class floral homeotic genes. Interacts together with the SKP1-like protein ASK1 to form a ubiquitin E3 ligase complex and could indirectly promote the ubiquitination and degradation of specific proteins controlling the floral primordia development like repressors of B class floral homeotic genes. This chain is Protein UNUSUAL FLORAL ORGANS (UFO), found in Arabidopsis thaliana (Mouse-ear cress).